A 379-amino-acid polypeptide reads, in one-letter code: Chaperone protein DnaJ (379 aa).

The region spanning 5 to 70 is the J domain; the sequence is DYYEVLGVQK…QKRAAYDRFG (66 aa). The CR-type zinc finger occupies 137 to 215; the sequence is GATTTVRVPT…CGGQGRVRKE (79 aa). Residues Cys-150, Cys-153, Cys-167, Cys-170, Cys-189, Cys-192, Cys-203, and Cys-206 each coordinate Zn(2+). CXXCXGXG motif repeat units lie at residues 150–157, 167–174, 189–196, and 203–210; these read CESCNGTG, CPTCNGHG, CPACHGVG, and CRTCGGQG.

The protein belongs to the DnaJ family. As to quaternary structure, homodimer. The cofactor is Zn(2+).

It localises to the cytoplasm. In terms of biological role, participates actively in the response to hyperosmotic and heat shock by preventing the aggregation of stress-denatured proteins and by disaggregating proteins, also in an autonomous, DnaK-independent fashion. Unfolded proteins bind initially to DnaJ; upon interaction with the DnaJ-bound protein, DnaK hydrolyzes its bound ATP, resulting in the formation of a stable complex. GrpE releases ADP from DnaK; ATP binding to DnaK triggers the release of the substrate protein, thus completing the reaction cycle. Several rounds of ATP-dependent interactions between DnaJ, DnaK and GrpE are required for fully efficient folding. Also involved, together with DnaK and GrpE, in the DNA replication of plasmids through activation of initiation proteins. This chain is Chaperone protein DnaJ, found in Rhodospirillum centenum (strain ATCC 51521 / SW).